Consider the following 293-residue polypeptide: N-acetylneuraminate lyase (293 aa).

The aceneuramate site is built by serine 48 and serine 49. Tyrosine 137 acts as the Proton donor in catalysis. Lysine 165 serves as the catalytic Schiff-base intermediate with substrate. Aceneuramate is bound by residues threonine 167, glycine 189, aspartate 191, glutamate 192, and serine 208.

This sequence belongs to the DapA family. NanA subfamily. Homotetramer.

It localises to the cytoplasm. The enzyme catalyses aceneuramate = aldehydo-N-acetyl-D-mannosamine + pyruvate. Its pathway is amino-sugar metabolism; N-acetylneuraminate degradation; D-fructose 6-phosphate from N-acetylneuraminate: step 1/5. Its function is as follows. Catalyzes the reversible aldol cleavage of N-acetylneuraminic acid (sialic acid; Neu5Ac) to form pyruvate and N-acetylmannosamine (ManNAc) via a Schiff base intermediate. In Staphylococcus aureus (strain MRSA252), this protein is N-acetylneuraminate lyase.